The following is a 317-amino-acid chain: Acetyl-coenzyme A carboxylase carboxyl transferase subunit alpha (317 aa).

Positions 39-293 (RLETKAREAL…GDAIADALSQ (255 aa)) constitute a CoA carboxyltransferase C-terminal domain.

Belongs to the AccA family. In terms of assembly, acetyl-CoA carboxylase is a heterohexamer composed of biotin carboxyl carrier protein (AccB), biotin carboxylase (AccC) and two subunits each of ACCase subunit alpha (AccA) and ACCase subunit beta (AccD).

The protein resides in the cytoplasm. The catalysed reaction is N(6)-carboxybiotinyl-L-lysyl-[protein] + acetyl-CoA = N(6)-biotinyl-L-lysyl-[protein] + malonyl-CoA. It participates in lipid metabolism; malonyl-CoA biosynthesis; malonyl-CoA from acetyl-CoA: step 1/1. Component of the acetyl coenzyme A carboxylase (ACC) complex. First, biotin carboxylase catalyzes the carboxylation of biotin on its carrier protein (BCCP) and then the CO(2) group is transferred by the carboxyltransferase to acetyl-CoA to form malonyl-CoA. The protein is Acetyl-coenzyme A carboxylase carboxyl transferase subunit alpha of Xanthobacter autotrophicus (strain ATCC BAA-1158 / Py2).